Consider the following 137-residue polypeptide: Beta-synuclein (137 aa).

2 consecutive repeat copies span residues 20 to 30 and 31 to 41. A 4 X 11 AA tandem repeats of [EGS]-K-T-K-[EQ]-[GQ]-V-X(4) region spans residues 20–67; it reads EKTKQGVTEAAEKTKEGVLYVGSKTKEGVVQGVASVAEKTKEQASHLG. The stretch at 42-56 is one 3; approximate repeat; sequence SKTKEGVVQGVASVA. Repeat unit 4 spans residues 57 to 67; it reads EKTKEQASHLG. Basic and acidic residues predominate over residues 88 to 97; it reads EFPTDLKPEE. The disordered stretch occupies residues 88–137; it reads EFPTDLKPEEVAQEAAEEPLIEPLMEPEGESYEDSPQEEYQEYEPEAKGP. Residues 98–131 show a composition bias toward acidic residues; sequence VAQEAAEEPLIEPLMEPEGESYEDSPQEEYQEYE. At serine 118 the chain carries Phosphoserine; by BARK1, CK2 and GRK5.

The protein belongs to the synuclein family. In terms of processing, phosphorylated. Phosphorylation by G-protein coupled receptor kinases (GRK) is more efficient than phosphorylation by CK1, CK2 and CaM-kinase II. In terms of tissue distribution, expressed specifically in brain.

The protein resides in the cytoplasm. May be involved in neuronal plasticity. This is Beta-synuclein (Sncb) from Rattus norvegicus (Rat).